The sequence spans 178 residues: MSMQEAKKENVMRRVVLDKVTVNIGVGESGERLQKAYQLVQELTGVKPVYTKGRKSIREFGVRKGAPIGVKATLRRQAAVEFLKKVLPAVNFRLKQSSFDNYGNVSFGIAEHVLIPGTRYDPEIGIFGMDVAITLVRPGYRTMKRKRKKASIPRRHRVTKEEAINFMKENFNVTILEG.

It belongs to the universal ribosomal protein uL5 family. As to quaternary structure, part of the 50S ribosomal subunit; contacts the 5S rRNA and probably tRNA. Forms a bridge to the 30S subunit in the 70S ribosome.

In terms of biological role, this is one of the proteins that bind and probably mediate the attachment of the 5S RNA into the large ribosomal subunit, where it forms part of the central protuberance. In the 70S ribosome it contacts protein S13 of the 30S subunit (bridge B1b), connecting the 2 subunits; this bridge is implicated in subunit movement. May contact the P site tRNA; the 5S rRNA and some of its associated proteins might help stabilize positioning of ribosome-bound tRNAs. This chain is Large ribosomal subunit protein uL5, found in Sulfolobus acidocaldarius (strain ATCC 33909 / DSM 639 / JCM 8929 / NBRC 15157 / NCIMB 11770).